The sequence spans 225 residues: Small ribosomal subunit protein uS2 (225 aa).

Residues 1–13 (MAEAKPALEKEAA) are compositionally biased toward basic and acidic residues. The tract at residues 1–33 (MAEAKPALEKEAAVKTGSIPSESEDETASHKEG) is disordered.

It belongs to the universal ribosomal protein uS2 family.

The polypeptide is Small ribosomal subunit protein uS2 (Methanosarcina acetivorans (strain ATCC 35395 / DSM 2834 / JCM 12185 / C2A)).